A 462-amino-acid polypeptide reads, in one-letter code: Cysteine--tRNA ligase (462 aa).

C29 contributes to the Zn(2+) binding site. The 'HIGH' region signature appears at 31 to 41 (PTVYDHAHIGN). Residues C214, H239, and E243 each contribute to the Zn(2+) site. The 'KMSKS' region motif lies at 272–276 (KMSKS). An ATP-binding site is contributed by K275.

Belongs to the class-I aminoacyl-tRNA synthetase family. As to quaternary structure, monomer. Zn(2+) is required as a cofactor.

Its subcellular location is the cytoplasm. The enzyme catalyses tRNA(Cys) + L-cysteine + ATP = L-cysteinyl-tRNA(Cys) + AMP + diphosphate. This is Cysteine--tRNA ligase from Azorhizobium caulinodans (strain ATCC 43989 / DSM 5975 / JCM 20966 / LMG 6465 / NBRC 14845 / NCIMB 13405 / ORS 571).